A 400-amino-acid polypeptide reads, in one-letter code: Glutamyl-tRNA reductase (400 aa).

Residues threonine 45–arginine 48, serine 103, glutamate 108–glutamine 110, and glutamine 114 each bind substrate. Cysteine 46 acts as the Nucleophile in catalysis. Glycine 179–glycine 184 serves as a coordination point for NADP(+).

It belongs to the glutamyl-tRNA reductase family. In terms of assembly, homodimer.

The catalysed reaction is (S)-4-amino-5-oxopentanoate + tRNA(Glu) + NADP(+) = L-glutamyl-tRNA(Glu) + NADPH + H(+). Its pathway is porphyrin-containing compound metabolism; protoporphyrin-IX biosynthesis; 5-aminolevulinate from L-glutamyl-tRNA(Glu): step 1/2. In terms of biological role, catalyzes the NADPH-dependent reduction of glutamyl-tRNA(Glu) to glutamate 1-semialdehyde (GSA). This chain is Glutamyl-tRNA reductase, found in Clostridium perfringens (strain ATCC 13124 / DSM 756 / JCM 1290 / NCIMB 6125 / NCTC 8237 / Type A).